The following is a 688-amino-acid chain: Polyribonucleotide nucleotidyltransferase (688 aa).

Mg(2+) is bound by residues D484 and D490. A KH domain is found at 550 to 609; sequence PTTEIFNVAPDKIVEIIGQGGRVIREIVEKFEVKIDLNKPSGEVKIMGNKERVLKTKEFI. Residues 626 to 688 form the S1 motif domain; the sequence is DEVLEAQVKR…NKGKIALDLA (63 aa).

Belongs to the polyribonucleotide nucleotidyltransferase family. Mg(2+) serves as cofactor.

It localises to the cytoplasm. The enzyme catalyses RNA(n+1) + phosphate = RNA(n) + a ribonucleoside 5'-diphosphate. Involved in mRNA degradation. Catalyzes the phosphorolysis of single-stranded polyribonucleotides processively in the 3'- to 5'-direction. This Helicobacter pylori (strain Shi470) protein is Polyribonucleotide nucleotidyltransferase.